Reading from the N-terminus, the 154-residue chain is uncharacterized protein (154 aa).

2 consecutive transmembrane segments (helical) span residues 19–39 (LFAY…GLLL) and 51–71 (ADQV…LLFA).

It is found in the cell membrane. This is an uncharacterized protein from Mycobacterium tuberculosis (strain CDC 1551 / Oshkosh).